A 307-amino-acid polypeptide reads, in one-letter code: Probable acetylxylan esterase A (307 aa).

An N-terminal signal peptide occupies residues 1–19; the sequence is MILLSYLLTYLLCALTCSA. Catalysis depends on Ser150, which acts as the Charge relay system. Asn192 and Asn270 each carry an N-linked (GlcNAc...) asparagine glycan.

This sequence belongs to the carbohydrate esterase 1 (CE1) family. AxeA subfamily. In terms of assembly, monomer.

It localises to the secreted. It carries out the reaction Deacetylation of xylans and xylo-oligosaccharides.. It participates in glycan degradation; xylan degradation. Its function is as follows. Acetylxylan esterase involved in the hydrolysis of xylan, a major structural heterogeneous polysaccharide found in plant biomass representing the second most abundant polysaccharide in the biosphere, after cellulose. Degrades acetylated xylans by cleaving acetyl side groups from the hetero-xylan backbone. This Aspergillus flavus (strain ATCC 200026 / FGSC A1120 / IAM 13836 / NRRL 3357 / JCM 12722 / SRRC 167) protein is Probable acetylxylan esterase A (axeA).